A 75-amino-acid polypeptide reads, in one-letter code: UPF0057 membrane protein At2g24040 (75 aa).

A run of 2 helical transmembrane segments spans residues 4-24 and 33-53; these read SCELCCEIFIAILLPPVGVCL and FFICLILTCLGYLPGIIYAIY.

The protein belongs to the UPF0057 (PMP3) family.

It is found in the membrane. This is UPF0057 membrane protein At2g24040 from Arabidopsis thaliana (Mouse-ear cress).